The sequence spans 164 residues: Succinate dehydrogenase assembly factor 3, mitochondrial (164 aa).

The transit peptide at 1 to 51 (MRPTLLRLANASGPLPLSVSQASVQLIPPIPLYRRLLRAHRLLPVDMRYMG) directs the protein to the mitochondrion. The span at 136–145 (KSPEQIEREA) shows a compositional bias: basic and acidic residues. Residues 136-164 (KSPEQIEREANSAGVSPVNPNDPTTAGNS) are disordered. Over residues 153 to 164 (VNPNDPTTAGNS) the composition is skewed to polar residues.

It belongs to the complex I LYR family. SDHAF3 subfamily. Interacts with the iron-sulfur protein subunit within the SDH catalytic dimer.

The protein localises to the mitochondrion matrix. Functionally, plays an essential role in the assembly of succinate dehydrogenase (SDH), an enzyme complex (also referred to as respiratory complex II) that is a component of both the tricarboxylic acid (TCA) cycle and the mitochondrial electron transport chain, and which couples the oxidation of succinate to fumarate with the reduction of ubiquinone (coenzyme Q) to ubiquinol. Promotes maturation of the iron-sulfur protein subunit of the SDH catalytic dimer, protecting it from the deleterious effects of oxidants. May act together with SDHAF1. The protein is Succinate dehydrogenase assembly factor 3, mitochondrial of Cryptococcus neoformans var. neoformans serotype D (strain B-3501A) (Filobasidiella neoformans).